The following is a 489-amino-acid chain: Glycogen synthase (489 aa).

Position 15 (K15) interacts with ADP-alpha-D-glucose.

The protein belongs to the glycosyltransferase 1 family. Bacterial/plant glycogen synthase subfamily.

The catalysed reaction is [(1-&gt;4)-alpha-D-glucosyl](n) + ADP-alpha-D-glucose = [(1-&gt;4)-alpha-D-glucosyl](n+1) + ADP + H(+). It participates in glycan biosynthesis; glycogen biosynthesis. In terms of biological role, synthesizes alpha-1,4-glucan chains using ADP-glucose. The polypeptide is Glycogen synthase (Francisella tularensis subsp. holarctica (strain FTNF002-00 / FTA)).